Consider the following 178-residue polypeptide: ATP-dependent protease subunit HslV (178 aa).

Residue T7 is part of the active site. G162, C165, and T168 together coordinate Na(+).

The protein belongs to the peptidase T1B family. HslV subfamily. As to quaternary structure, a double ring-shaped homohexamer of HslV is capped on each side by a ring-shaped HslU homohexamer. The assembly of the HslU/HslV complex is dependent on binding of ATP.

It localises to the cytoplasm. The enzyme catalyses ATP-dependent cleavage of peptide bonds with broad specificity.. Its activity is regulated as follows. Allosterically activated by HslU binding. Protease subunit of a proteasome-like degradation complex believed to be a general protein degrading machinery. In Janthinobacterium sp. (strain Marseille) (Minibacterium massiliensis), this protein is ATP-dependent protease subunit HslV.